A 113-amino-acid polypeptide reads, in one-letter code: Hydrogenase maturation factor HypA (113 aa).

Residue His2 participates in Ni(2+) binding. Zn(2+)-binding residues include Cys73, Cys76, Cys89, and Cys92.

Belongs to the HypA/HybF family.

Functionally, involved in the maturation of [NiFe] hydrogenases. Required for nickel insertion into the metal center of the hydrogenase. The sequence is that of Hydrogenase maturation factor HypA from Actinobacillus succinogenes (strain ATCC 55618 / DSM 22257 / CCUG 43843 / 130Z).